Consider the following 313-residue polypeptide: uncharacterized protein (313 aa).

The next 3 membrane-spanning stretches (helical) occupy residues 41 to 61 (LAGTMILSVLSSPALVSGLMV), 68 to 88 (VHSVLFPIPIFFSINQLFHYF), and 102 to 122 (QLLLFLISHFLLLLVLTKLVL).

Belongs to the cytochrome b family.

It localises to the mitochondrion membrane. This is an uncharacterized protein from Arabidopsis thaliana (Mouse-ear cress).